Consider the following 318-residue polypeptide: NADH-ubiquinone oxidoreductase chain 1 (318 aa).

Transmembrane regions (helical) follow at residues 2–22 (FLTNISCLIIPILLAVAFLTL), 36–56 (GPNIVGPYGLLQPIADAIKLF), 69–89 (LLFTIAPTLALSLALTLWIPL), 100–120 (LGMLFILAMSSLAVYSILWSG), 130–152 (IGALRAVAQTISYEVTLAIILLH), 171–191 (HIWLIIPSWPLTMMWFISTLA), 217–237 (AGPFALFFLAEYANIMMMNAL), 254–273 (LYSTNFMLKTTMLTISFLWI), and 294–314 (LPLTLALCMWHTSLLISLTSI).

The protein belongs to the complex I subunit 1 family.

The protein localises to the mitochondrion inner membrane. The enzyme catalyses a ubiquinone + NADH + 5 H(+)(in) = a ubiquinol + NAD(+) + 4 H(+)(out). Functionally, core subunit of the mitochondrial membrane respiratory chain NADH dehydrogenase (Complex I) that is believed to belong to the minimal assembly required for catalysis. Complex I functions in the transfer of electrons from NADH to the respiratory chain. The immediate electron acceptor for the enzyme is believed to be ubiquinone. This is NADH-ubiquinone oxidoreductase chain 1 (MT-ND1) from Cyclopes didactylus (Silky anteater).